We begin with the raw amino-acid sequence, 155 residues long: Short-chain-enoyl-CoA hydratase (155 aa).

This sequence belongs to the enoyl-CoA hydratase/isomerase family.

It catalyses the reaction a short-chain (3S)-3-hydroxyacyl-CoA = a short-chain (2E)-enoyl-CoA + H2O. It functions in the pathway lipid metabolism; butanoate metabolism. This Clostridioides difficile (Peptoclostridium difficile) protein is Short-chain-enoyl-CoA hydratase (crt).